The chain runs to 225 residues: NAD(P)H-quinone oxidoreductase subunit K, chloroplastic (225 aa).

Cysteine 43, cysteine 44, cysteine 108, and cysteine 139 together coordinate [4Fe-4S] cluster.

This sequence belongs to the complex I 20 kDa subunit family. As to quaternary structure, NDH is composed of at least 16 different subunits, 5 of which are encoded in the nucleus. It depends on [4Fe-4S] cluster as a cofactor.

It localises to the plastid. It is found in the chloroplast thylakoid membrane. The catalysed reaction is a plastoquinone + NADH + (n+1) H(+)(in) = a plastoquinol + NAD(+) + n H(+)(out). It carries out the reaction a plastoquinone + NADPH + (n+1) H(+)(in) = a plastoquinol + NADP(+) + n H(+)(out). Functionally, NDH shuttles electrons from NAD(P)H:plastoquinone, via FMN and iron-sulfur (Fe-S) centers, to quinones in the photosynthetic chain and possibly in a chloroplast respiratory chain. The immediate electron acceptor for the enzyme in this species is believed to be plastoquinone. Couples the redox reaction to proton translocation, and thus conserves the redox energy in a proton gradient. This chain is NAD(P)H-quinone oxidoreductase subunit K, chloroplastic, found in Nicotiana tabacum (Common tobacco).